A 125-amino-acid chain; its full sequence is Protein ApaG (125 aa).

In terms of domain architecture, ApaG spans 3-125 (TAVTEGIEVT…FPLVVPGTLN (123 aa)).

This is Protein ApaG from Anaeromyxobacter sp. (strain K).